A 127-amino-acid chain; its full sequence is Acetylcholine receptor subunit alpha (127 aa).

Residues 1–127 lie on the Extracellular side of the membrane; that stretch reads ADGIFAIDQF…YFIVNVIIPC (127 aa). Cysteine 33 and cysteine 47 are joined by a disulfide. Residues asparagine 46 and asparagine 94 are each glycosylated (N-linked (GlcNAc...) asparagine). Cysteine 97 and cysteine 98 form a disulfide bridge.

It belongs to the ligand-gated ion channel (TC 1.A.9) family. Acetylcholine receptor (TC 1.A.9.1) subfamily. Alpha-1/CHRNA1 sub-subfamily. One of the alpha chains that assemble within the acetylcholine receptor, a pentamer of two alpha chains, a beta, a delta, and a gamma or epsilon chains.

The protein resides in the postsynaptic cell membrane. It localises to the cell membrane. The catalysed reaction is K(+)(in) = K(+)(out). The enzyme catalyses Na(+)(in) = Na(+)(out). In terms of biological role, upon acetylcholine binding, the AChR responds by an extensive change in conformation that affects all subunits and leads to opening of an ion-conducting channel across the plasma membrane. Does not bind alpha-bungarotoxin. This Natrix tessellata (Dice snake) protein is Acetylcholine receptor subunit alpha (CHRNA1).